A 224-amino-acid polypeptide reads, in one-letter code: Ethylene-inducing xylanase 5 (224 aa).

The signal sequence occupies residues 1-16 (MLKSLVVLLLTSRVIA). One can recognise a GH11 domain in the interval 32–218 (QATPNSQGTH…SSGFAEMTVA (187 aa)). Residue Asn88 is glycosylated (N-linked (GlcNAc...) asparagine). The active-site Nucleophile is Glu117. Residue Glu205 is the Proton donor of the active site.

The protein belongs to the glycosyl hydrolase 11 (cellulase G) family.

The catalysed reaction is Endohydrolysis of (1-&gt;4)-beta-D-xylosidic linkages in xylans.. It functions in the pathway glycan degradation; xylan degradation. Its function is as follows. Endo-1,4-beta-xylanase involved in the hydrolysis of xylan, a major structural heterogeneous polysaccharide found in plant biomass representing the second most abundant polysaccharide in the biosphere, after cellulose. May act as an elicitor of plant defense responses in certain plants but does not exhibit any cell death when transiently expressed in N.benthamiana. This is Ethylene-inducing xylanase 5 from Verticillium dahliae (strain VdLs.17 / ATCC MYA-4575 / FGSC 10137) (Verticillium wilt).